We begin with the raw amino-acid sequence, 162 residues long: Interleukin-15 (162 aa).

The N-terminal stretch at 1–29 (MRISKPHLRSVSIQCYLCLLLNSHFLTEA) is a signal peptide. The propeptide occupies 30-48 (GIHVFILGCFSAGLPKTEA). 2 disulfides stabilise this stretch: Cys-83/Cys-133 and Cys-90/Cys-136. An N-linked (GlcNAc...) asparagine glycan is attached at Asn-127.

It belongs to the IL-15/IL-21 family.

The protein localises to the secreted. In terms of biological role, cytokine that plays a major role in the development of inflammatory and protective immune responses to microbial invaders and parasites by modulating immune cells of both the innate and adaptive immune systems. Stimulates the proliferation of natural killer cells, T-cells and B-cells and promotes the secretion of several cytokines. In monocytes, induces the production of IL8 and monocyte chemotactic protein 1/CCL2, two chemokines that attract neutrophils and monocytes respectively to sites of infection. Unlike most cytokines, which are secreted in soluble form, IL15 is expressed in association with its high affinity IL15RA on the surface of IL15-producing cells and delivers signals to target cells that express IL2RB and IL2RG receptor subunits. Binding to its receptor triggers the phosphorylation of JAK1 and JAK3 and the recruitment and subsequent phosphorylation of signal transducer and activator of transcription-3/STAT3 and STAT5. In mast cells, induces the rapid tyrosine phosphorylation of STAT6 and thereby controls mast cell survival and release of cytokines such as IL4. This Macaca mulatta (Rhesus macaque) protein is Interleukin-15 (IL15).